The following is a 428-amino-acid chain: Leucine-rich repeat-containing protein 42 (428 aa).

LRR repeat units lie at residues 149 to 170 (VLCS…EEIK), 174 to 195 (ELTC…LEHL), 202 to 222 (SVTQ…RKMT), 234 to 255 (NLTL…GYLF), and 259 to 280 (KLNC…KHKL). The interval 379-412 (KHEAISSQESKKSKKRPFEESETEQNNSSQPSKQ) is disordered. Residues Ser406 and Ser407 each carry the phosphoserine modification.

The protein belongs to the LRRC42 family.

This is Leucine-rich repeat-containing protein 42 (LRRC42) from Homo sapiens (Human).